The sequence spans 795 residues: Phenylalanine--tRNA ligase beta subunit (795 aa).

Residues 39–148 (KSEFHGVVVG…KETLVGINVY (110 aa)) form the tRNA-binding domain. Residues 400–475 (HKNNTIRLHH…RIYEYNNVHL (76 aa)) form the B5 domain. Residues aspartate 453, aspartate 459, and aspartate 463 each coordinate Mg(2+). Positions 701 to 794 (SKFPTVRRDI…LQKKFQAVLR (94 aa)) constitute an FDX-ACB domain.

This sequence belongs to the phenylalanyl-tRNA synthetase beta subunit family. Type 1 subfamily. Tetramer of two alpha and two beta subunits. Mg(2+) serves as cofactor.

Its subcellular location is the cytoplasm. It carries out the reaction tRNA(Phe) + L-phenylalanine + ATP = L-phenylalanyl-tRNA(Phe) + AMP + diphosphate + H(+). The protein is Phenylalanine--tRNA ligase beta subunit (pheT) of Buchnera aphidicola subsp. Acyrthosiphon pisum (strain APS) (Acyrthosiphon pisum symbiotic bacterium).